The primary structure comprises 430 residues: tRNA(Ile)-lysidine synthase (430 aa).

Residue 24–29 participates in ATP binding; the sequence is SGGLDS.

This sequence belongs to the tRNA(Ile)-lysidine synthase family.

The protein resides in the cytoplasm. It carries out the reaction cytidine(34) in tRNA(Ile2) + L-lysine + ATP = lysidine(34) in tRNA(Ile2) + AMP + diphosphate + H(+). Functionally, ligates lysine onto the cytidine present at position 34 of the AUA codon-specific tRNA(Ile) that contains the anticodon CAU, in an ATP-dependent manner. Cytidine is converted to lysidine, thus changing the amino acid specificity of the tRNA from methionine to isoleucine. This Haemophilus influenzae (strain PittEE) protein is tRNA(Ile)-lysidine synthase.